A 208-amino-acid polypeptide reads, in one-letter code: Type 4 adapter protein LvgA (208 aa).

In terms of assembly, the T4BSS is a complex nanomachine composed of several subcomplexes. This subunit is part of the Type IV Coupling Complex (T4CC), a subcomplex composed of the DotLMNYZ core and the IcmSW-LvgA adapter subunits, linked by the C-terminal tail of DotL. Interacts with DotL, IcmS and IcmW. Interacts with various effector proteins, including VpdB, SetA, PieA and SidH.

It is found in the cytoplasm. Its function is as follows. Component of the Dot/Icm type IVB secretion system (T4BSS), which is used to inject bacterial effector proteins into eukaryotic host cells. Part of a subcomplex which recruits effector proteins and delivers them to the core transmembrane subcomplex. Is a critical subunit for binding a subset of effector proteins. Recognizes more than one type of binding motif. May be a critical factor that confers host specificity. In Legionella pneumophila subsp. pneumophila (strain Philadelphia 1 / ATCC 33152 / DSM 7513), this protein is Type 4 adapter protein LvgA.